We begin with the raw amino-acid sequence, 1055 residues long: Error-prone DNA polymerase (1055 aa).

Belongs to the DNA polymerase type-C family. DnaE2 subfamily.

The protein localises to the cytoplasm. The catalysed reaction is DNA(n) + a 2'-deoxyribonucleoside 5'-triphosphate = DNA(n+1) + diphosphate. Functionally, DNA polymerase involved in damage-induced mutagenesis and translesion synthesis (TLS). It is not the major replicative DNA polymerase. This chain is Error-prone DNA polymerase, found in Corynebacterium glutamicum (strain ATCC 13032 / DSM 20300 / JCM 1318 / BCRC 11384 / CCUG 27702 / LMG 3730 / NBRC 12168 / NCIMB 10025 / NRRL B-2784 / 534).